A 535-amino-acid polypeptide reads, in one-letter code: CTP synthase (535 aa).

Positions 1-267 are amidoligase domain; the sequence is MTKYIFVTGG…DQIVCDHLKL (267 aa). A CTP-binding site is contributed by S13. UTP is bound at residue S13. Residue 14-19 coordinates ATP; sequence SLGKGI. Y54 contributes to the L-glutamine binding site. D71 is a binding site for ATP. D71 and E141 together coordinate Mg(2+). CTP-binding positions include 148–150, 188–193, and K224; these read DIE and KTKPTQ. UTP-binding positions include 188–193 and K224; that span reads KTKPTQ. 240–242 is an ATP binding site; the sequence is RDA. The region spanning 292–534 is the Glutamine amidotransferase type-1 domain; that stretch reads KIALVGKYVE…VKASITNKES (243 aa). Residue G354 participates in L-glutamine binding. C381 serves as the catalytic Nucleophile; for glutamine hydrolysis. Residues 382–385, E405, and R462 each bind L-glutamine; that span reads LGMQ. Catalysis depends on residues H507 and E509.

The protein belongs to the CTP synthase family. Homotetramer.

It catalyses the reaction UTP + L-glutamine + ATP + H2O = CTP + L-glutamate + ADP + phosphate + 2 H(+). It carries out the reaction L-glutamine + H2O = L-glutamate + NH4(+). The catalysed reaction is UTP + NH4(+) + ATP = CTP + ADP + phosphate + 2 H(+). It participates in pyrimidine metabolism; CTP biosynthesis via de novo pathway; CTP from UDP: step 2/2. With respect to regulation, allosterically activated by GTP, when glutamine is the substrate; GTP has no effect on the reaction when ammonia is the substrate. The allosteric effector GTP functions by stabilizing the protein conformation that binds the tetrahedral intermediate(s) formed during glutamine hydrolysis. Inhibited by the product CTP, via allosteric rather than competitive inhibition. Catalyzes the ATP-dependent amination of UTP to CTP with either L-glutamine or ammonia as the source of nitrogen. Regulates intracellular CTP levels through interactions with the four ribonucleotide triphosphates. The sequence is that of CTP synthase from Bacillus thuringiensis subsp. konkukian (strain 97-27).